A 470-amino-acid polypeptide reads, in one-letter code: Cysteine--tRNA ligase (470 aa).

Residue Cys28 participates in Zn(2+) binding. The 'HIGH' region signature appears at 30–40; that stretch reads PTVYNYIHIGN. Residues Cys212, His237, and Glu241 each coordinate Zn(2+). Positions 271 to 275 match the 'KMSKS' region motif; it reads KMSKS. ATP is bound at residue Lys274.

It belongs to the class-I aminoacyl-tRNA synthetase family. As to quaternary structure, monomer. It depends on Zn(2+) as a cofactor.

The protein resides in the cytoplasm. It catalyses the reaction tRNA(Cys) + L-cysteine + ATP = L-cysteinyl-tRNA(Cys) + AMP + diphosphate. The protein is Cysteine--tRNA ligase of Limosilactobacillus reuteri (strain DSM 20016) (Lactobacillus reuteri).